We begin with the raw amino-acid sequence, 191 residues long: Orotate phosphoribosyltransferase (191 aa).

114 to 122 contacts 5-phospho-alpha-D-ribose 1-diphosphate; the sequence is EDVVTTGKS. The orotate site is built by Thr118 and Arg146.

It belongs to the purine/pyrimidine phosphoribosyltransferase family. PyrE subfamily. In terms of assembly, homodimer. Requires Mg(2+) as cofactor.

It carries out the reaction orotidine 5'-phosphate + diphosphate = orotate + 5-phospho-alpha-D-ribose 1-diphosphate. The protein operates within pyrimidine metabolism; UMP biosynthesis via de novo pathway; UMP from orotate: step 1/2. Catalyzes the transfer of a ribosyl phosphate group from 5-phosphoribose 1-diphosphate to orotate, leading to the formation of orotidine monophosphate (OMP). In Clostridium botulinum (strain ATCC 19397 / Type A), this protein is Orotate phosphoribosyltransferase.